A 329-amino-acid chain; its full sequence is Deoxynucleotidyltransferase terminal-interacting protein 1 (329 aa).

Disordered stretches follow at residues 1–22 (MGAT…GGLE) and 147–178 (KRGR…ILSS). An important for dimerization region spans residues 56–147 (MTTSFTDPAI…RLTHELPGIK (92 aa)). Basic and acidic residues predominate over residues 147 to 158 (KRGRQAEEECAH). Positions 159–173 (RGSPLPKKRKGRPPG) form a DNA-binding region, a.T hook. Position 161 is a phosphoserine (Ser161). A Nuclear localization signal motif is present at residues 164–170 (PKKRKGR). An important for DNA and nucleosome binding region spans residues 197–316 (REGPKWDPAR…MRKYMETLRT (120 aa)). Positions 216–237 (GSRANKALGMGGTRGRIYIKHP) form a DNA-binding region, H-T-H motif.

As to quaternary structure, monomer and homodimer. A minor proportion may form homotrimers. Interacts with ZNF541. Interacts with the terminal deoxynucleotidyltransferase DNTT. Interacts with TRERF1. Identified in a histone deacetylase complex that contains DNTTIP1, HDAC1 and MIDEAS; this complex assembles into a tetramer that contains four copies of each protein chain. Component of a histone deacetylase complex containing DNTTIP1, ZNF541, HDAC1 and HDAC2. Identified in a complex with KCTD19, HDAC1, HDAC2 and ZNF541.

It is found in the nucleus. In terms of biological role, increases DNTT terminal deoxynucleotidyltransferase activity (in vitro). Also acts as a transcriptional regulator, binding to the consensus sequence 5'-GNTGCATG-3' following an AT-tract. Associates with RAB20 promoter and positively regulates its transcription. Binds DNA and nucleosomes; may recruit HDAC1 complexes to nucleosomes or naked DNA. The sequence is that of Deoxynucleotidyltransferase terminal-interacting protein 1 (DNTTIP1) from Pongo abelii (Sumatran orangutan).